Consider the following 479-residue polypeptide: Beta-amyrin 28-monooxygenase (479 aa).

The helical transmembrane segment at 5 to 25 (FYLSLLLLFVTFISLSLFFIF) threads the bilayer. Position 426 (cysteine 426) interacts with heme.

Belongs to the cytochrome P450 family. The cofactor is heme. As to expression, expressed in roots, nodules and flowers.

It is found in the membrane. The enzyme catalyses beta-amyrin + 3 reduced [NADPH--hemoprotein reductase] + 3 O2 = oleanolate + 3 oxidized [NADPH--hemoprotein reductase] + 4 H2O + 4 H(+). In terms of biological role, catalyzes the carboxylation of beta-amyrin at the C-28 position to form oleanolic acid. Involved in an early step in the hemolytic saponin biosynthetic pathway. Catalyzes the carboxylation of alpha-amyrin and lupeol at the C-28 position to form ursolic acid and betulinic acid respectively. The protein is Beta-amyrin 28-monooxygenase of Medicago truncatula (Barrel medic).